The chain runs to 623 residues: MTRTVDEIKYETPSSWEHKSLDVAEDGRRLAPHSDTARPKGRIRRSMTACHTCRKLKTRCDLDPRGHACRRCLSLRIDCKLPETTDRFQDSAAMWPDATSAIPSIEERLTSLERCMREMTGMMRQMLDHSPGFANASVPHLTKSIITDENASMEGSPSSPFLPKPVRLIQDLQSDFFGEAETSPVDSPLSSDGNAKGAIDSKLSLKLLQTFVDHFGACVSIYNLSDIHNDMKAPDSLLYNTACLLASRYVPGIPTSTVHAIYLQVRHAVVNILWEKPPLKYETLQALALLCLWPATAQKEPPMDSWLLSGISINHAIIALDFLNYAPSEVMVDNETAAQLRLWNTYCLTQLHFAVGNARPFHIQQRYLDHCPRILEHPAATLEDARVVAEIQLYLMTLRLQSNSSRMRLADLDYEEIERWKREWAHLFSGESSTLELSLWFCQTLLHRTAMRLQPRSDRLASEVLQTSRLIISRFLQIRYSTALSLVDQVYFIVGYAALNLCDFNLMDPLIEQVQMFLLHLSPNEDHIAYRFSCMVAEFKRRCGSAECNDPSSTVKGSPLSSYGDSRKMSMGQAPFMPPLMDGMIEGYGFEQLMPEVMPSSFPDGILNGMPVTGLAAYRSATL.

A DNA-binding region (zn(2)-C6 fungal-type) is located at residues 50–79 (CHTCRKLKTRCDLDPRGHACRRCLSLRIDC).

This sequence belongs to the prtT family.

The protein resides in the nucleus. Its function is as follows. Transcription factor required for protein utilization and degradation. Regulates transcription of major secreted proteases. In Aspergillus niger (strain ATCC MYA-4892 / CBS 513.88 / FGSC A1513), this protein is Transcriptional activator of proteases prtT (prtT).